Reading from the N-terminus, the 148-residue chain is ATP synthase epsilon chain (148 aa).

Belongs to the ATPase epsilon chain family. As to quaternary structure, F-type ATPases have 2 components, CF(1) - the catalytic core - and CF(0) - the membrane proton channel. CF(1) has five subunits: alpha(3), beta(3), gamma(1), delta(1), epsilon(1). CF(0) has three main subunits: a, b and c.

The protein localises to the cell inner membrane. In terms of biological role, produces ATP from ADP in the presence of a proton gradient across the membrane. The polypeptide is ATP synthase epsilon chain (Paracoccus denitrificans (strain Pd 1222)).